The following is a 397-amino-acid chain: ATP-dependent RNA helicase eIF4A (397 aa).

The Q motif signature appears at 23 to 51 (YKFDDLNLKPNIVRGIFGYGYETPSAIQQ). One can recognise a Helicase ATP-binding domain in the interval 54-224 (ILPITEGRDV…TKFMNNPVRI (171 aa)). Position 67-74 (67-74 (AQSGTGKT)) interacts with ATP. Residues 172–175 (DEAD) carry the DEAD box motif. The Helicase C-terminal domain occupies 235–396 (GIKQFYINVE…EMPADIGALF (162 aa)).

Belongs to the DEAD box helicase family. eIF4A subfamily. In terms of assembly, component of the eIF4F complex, which composition varies with external and internal environmental conditions. It is composed of at least eIF4A, eIF4E and eIF4G.

Its subcellular location is the cytoplasm. The enzyme catalyses ATP + H2O = ADP + phosphate + H(+). In terms of biological role, ATP-dependent RNA helicase which is a subunit of the eIF4F complex involved in cap recognition and is required for mRNA binding to ribosome. In the current model of translation initiation, eIF4A unwinds RNA secondary structures in the 5'-UTR of mRNAs which is necessary to allow efficient binding of the small ribosomal subunit, and subsequent scanning for the initiator codon. This Scheffersomyces stipitis (strain ATCC 58785 / CBS 6054 / NBRC 10063 / NRRL Y-11545) (Yeast) protein is ATP-dependent RNA helicase eIF4A (TIF1).